The sequence spans 176 residues: Large ribosomal subunit protein uL6 (176 aa).

It belongs to the universal ribosomal protein uL6 family. In terms of assembly, part of the 50S ribosomal subunit.

In terms of biological role, this protein binds to the 23S rRNA, and is important in its secondary structure. It is located near the subunit interface in the base of the L7/L12 stalk, and near the tRNA binding site of the peptidyltransferase center. The protein is Large ribosomal subunit protein uL6 of Burkholderia multivorans (strain ATCC 17616 / 249).